Consider the following 363-residue polypeptide: Chorismate synthase (363 aa).

NADP(+) is bound by residues R48 and R54. FMN contacts are provided by residues R125–S127, N238–A239, G278, K293–S297, and R319.

Belongs to the chorismate synthase family. In terms of assembly, homotetramer. Requires FMNH2 as cofactor.

It catalyses the reaction 5-O-(1-carboxyvinyl)-3-phosphoshikimate = chorismate + phosphate. It participates in metabolic intermediate biosynthesis; chorismate biosynthesis; chorismate from D-erythrose 4-phosphate and phosphoenolpyruvate: step 7/7. Catalyzes the anti-1,4-elimination of the C-3 phosphate and the C-6 proR hydrogen from 5-enolpyruvylshikimate-3-phosphate (EPSP) to yield chorismate, which is the branch point compound that serves as the starting substrate for the three terminal pathways of aromatic amino acid biosynthesis. This reaction introduces a second double bond into the aromatic ring system. The polypeptide is Chorismate synthase (Acidithiobacillus ferrooxidans (strain ATCC 23270 / DSM 14882 / CIP 104768 / NCIMB 8455) (Ferrobacillus ferrooxidans (strain ATCC 23270))).